The sequence spans 268 residues: Pantothenate synthetase (268 aa).

Met-18–His-25 is an ATP binding site. The Proton donor role is filled by His-25. Gln-49 contributes to the (R)-pantoate binding site. Gln-49 is a binding site for beta-alanine. Residue Gly-135 to Asp-138 coordinates ATP. Gln-141 contributes to the (R)-pantoate binding site. Residues Ile-164 and Leu-172–Arg-175 each bind ATP.

The protein belongs to the pantothenate synthetase family. In terms of assembly, homodimer.

Its subcellular location is the cytoplasm. It catalyses the reaction (R)-pantoate + beta-alanine + ATP = (R)-pantothenate + AMP + diphosphate + H(+). Its pathway is cofactor biosynthesis; (R)-pantothenate biosynthesis; (R)-pantothenate from (R)-pantoate and beta-alanine: step 1/1. Catalyzes the condensation of pantoate with beta-alanine in an ATP-dependent reaction via a pantoyl-adenylate intermediate. This Dehalococcoides mccartyi (strain CBDB1) protein is Pantothenate synthetase.